The chain runs to 140 residues: MEETSLFINFETLDLARVYLFGGVKYLDLLLVLSIIDVLTGVIKAWKFKKLRSRSAWFGYVRKLLNFFAVILANVIDTVLNLNGVLTFGTVLFYIANEGLSITENLAQIGVKIPSSITDRLQTIENEKEQSKNNADKAAG.

The next 2 membrane-spanning stretches (helical) occupy residues 26 to 43 (YLDLLLVLSIIDVLTGVI) and 64 to 86 (LLNFFAVILANVIDTVLNLNGVL).

Belongs to the bacteriophage holin family. Cp-1 holin subfamily.

The protein localises to the cell membrane. This is an uncharacterized protein from Bacillus subtilis (strain 168).